The sequence spans 300 residues: Non-secreted LysM effector LysM16 (300 aa).

The LysM domain occupies 176 to 222 (EWHTVFSGDTCQLIEAEYGITLEKFIALNTYVNSTCGNIWPDYAYCV).

The protein belongs to the secreted LysM effector family.

In terms of biological role, non-secreted LysM effector that might be involved in manipulation of host defenses for successful infection. This is Non-secreted LysM effector LysM16 from Penicillium expansum (Blue mold rot fungus).